Here is a 914-residue protein sequence, read N- to C-terminus: Isoleucine--tRNA ligase (914 aa).

The 'HIGH' region motif lies at 57–67 (PYANGQIHMGH). Glutamate 554 contacts L-isoleucyl-5'-AMP. Positions 595-599 (KMSKS) match the 'KMSKS' region motif. Lysine 598 provides a ligand contact to ATP. 4 residues coordinate Zn(2+): cysteine 883, cysteine 886, cysteine 904, and cysteine 907.

It belongs to the class-I aminoacyl-tRNA synthetase family. IleS type 1 subfamily. In terms of assembly, monomer. Requires Zn(2+) as cofactor.

The protein resides in the cytoplasm. The enzyme catalyses tRNA(Ile) + L-isoleucine + ATP = L-isoleucyl-tRNA(Ile) + AMP + diphosphate. Catalyzes the attachment of isoleucine to tRNA(Ile). As IleRS can inadvertently accommodate and process structurally similar amino acids such as valine, to avoid such errors it has two additional distinct tRNA(Ile)-dependent editing activities. One activity is designated as 'pretransfer' editing and involves the hydrolysis of activated Val-AMP. The other activity is designated 'posttransfer' editing and involves deacylation of mischarged Val-tRNA(Ile). This Macrococcus caseolyticus (strain JCSC5402) (Macrococcoides caseolyticum) protein is Isoleucine--tRNA ligase.